The primary structure comprises 353 residues: GTPase Obg (353 aa).

The region spanning methionine 1–leucine 159 is the Obg domain. One can recognise an OBG-type G domain in the interval alanine 160–glutamate 332. GTP-binding positions include glycine 166–serine 173, phenylalanine 191–histidine 195, aspartate 213–glycine 216, asparagine 284–aspartate 287, and serine 313–leucine 315. Mg(2+) contacts are provided by serine 173 and threonine 193.

Belongs to the TRAFAC class OBG-HflX-like GTPase superfamily. OBG GTPase family. As to quaternary structure, monomer. It depends on Mg(2+) as a cofactor.

The protein resides in the cytoplasm. In terms of biological role, an essential GTPase which binds GTP, GDP and possibly (p)ppGpp with moderate affinity, with high nucleotide exchange rates and a fairly low GTP hydrolysis rate. Plays a role in control of the cell cycle, stress response, ribosome biogenesis and in those bacteria that undergo differentiation, in morphogenesis control. The sequence is that of GTPase Obg from Methylobacillus flagellatus (strain ATCC 51484 / DSM 6875 / VKM B-1610 / KT).